A 149-amino-acid chain; its full sequence is Nucleoside diphosphate kinase (149 aa).

The ATP site is built by Lys-9, Phe-57, Arg-85, Thr-91, Arg-102, and Asn-112. The active-site Pros-phosphohistidine intermediate is the His-115.

The protein belongs to the NDK family. Homotetramer. It depends on Mg(2+) as a cofactor.

It localises to the cytoplasm. The catalysed reaction is a 2'-deoxyribonucleoside 5'-diphosphate + ATP = a 2'-deoxyribonucleoside 5'-triphosphate + ADP. The enzyme catalyses a ribonucleoside 5'-diphosphate + ATP = a ribonucleoside 5'-triphosphate + ADP. Functionally, major role in the synthesis of nucleoside triphosphates other than ATP. The ATP gamma phosphate is transferred to the NDP beta phosphate via a ping-pong mechanism, using a phosphorylated active-site intermediate. The protein is Nucleoside diphosphate kinase of Nostoc sp. (strain PCC 7120 / SAG 25.82 / UTEX 2576).